The sequence spans 165 residues: MHAKINPKKVEMFNLLKEFLDGKDSVFFLDYRGLTVATLTELRNRVENEKGELKVVKNNIMKRVLKDKHMEGLDSYLLGPTAVVTAVDEANVIAKIFYEFVKTSSLKVKGGFVLGEVYDEAKLNAYSKLPTKKESISLFMNVLKAPISKLARTLKALSDVKDVKV.

This sequence belongs to the universal ribosomal protein uL10 family. As to quaternary structure, part of the ribosomal stalk of the 50S ribosomal subunit. The N-terminus interacts with L11 and the large rRNA to form the base of the stalk. The C-terminus forms an elongated spine to which L12 dimers bind in a sequential fashion forming a multimeric L10(L12)X complex.

Forms part of the ribosomal stalk, playing a central role in the interaction of the ribosome with GTP-bound translation factors. The polypeptide is Large ribosomal subunit protein uL10 (Borrelia turicatae (strain 91E135)).